Consider the following 389-residue polypeptide: Alpha-(1,3)-fucosyltransferase 7 (389 aa).

Residues Met-1–Pro-55 lie on the Cytoplasmic side of the membrane. The helical; Signal-anchor for type II membrane protein transmembrane segment at Thr-56–Trp-78 threads the bilayer. Residues Leu-79–Ala-389 lie on the Lumenal side of the membrane. The cysteines at positions 115 and 123 are disulfide-linked. N-linked (GlcNAc...) asparagine glycosylation is present at Asn-128. Cys-258 and Cys-261 are oxidised to a cystine. A glycan (N-linked (GlcNAc...) asparagine) is linked at Asn-338. Cysteines 365 and 368 form a disulfide.

Belongs to the glycosyltransferase 10 family. N-glycosylated. Highly expressed in lung and bone marrow and to a much lesser extent in spleen, salivary gland and skeletal muscle.

The protein resides in the golgi apparatus. It localises to the golgi stack membrane. The enzyme catalyses an N-acetyl-alpha-neuraminyl-(2-&gt;3)-beta-D-galactosyl-(1-&gt;4)-N-acetyl-beta-D-glucosaminyl derivative + GDP-beta-L-fucose = an alpha-Neu5Ac-(2-&gt;3)-beta-D-Gal-(1-&gt;4)-[alpha-L-Fuc-(1-&gt;3)]-beta-D-GlcNAc derivative + GDP + H(+). The catalysed reaction is an alpha-Neu5Ac-(2-&gt;3)-beta-D-Gal-(1-&gt;4)-beta-D-GlcNAc6S derivative + GDP-beta-L-fucose = an alpha-Neu5Ac-(2-&gt;3)-beta-D-Gal-(1-&gt;4)-[alpha-L-Fuc-(1-&gt;3)]-beta-D-GlcNAc6S derivative + GDP + H(+). It catalyses the reaction a neolactoside IV(3)-alpha-NeuAc-nLc4Cer + GDP-beta-L-fucose = a neolactoside IV(3)-alpha-NeuNAc,III(3)-alpha-Fuc-nLc4Cer + GDP + H(+). It carries out the reaction a neolactoside VI(3)-alpha-NeuNAc-nLc6Cer + GDP-beta-L-fucose = a neolactoside VI(3)-alpha-NeuAc,V(3)-alphaFuc-nLc6Cer + GDP + H(+). The enzyme catalyses an alpha-Neu5Ac-(2-&gt;3)-beta-D-Gal-(1-&gt;4)-beta-D-GlcNAc-(1-&gt;3)-beta-D-Gal-(1-&gt;4)-[alpha-L-Fuc-(1-&gt;3)]-beta-D-GlcNAc derivative + GDP-beta-L-fucose = an alpha-Neu5Ac-(2-&gt;3)-beta-D-Gal-(1-&gt;4)-[alpha-L-Fuc-(1-&gt;3)]-beta-D-GlcNAc-(1-&gt;3)-beta-D-Gal-(1-&gt;4)-[alpha-L-Fuc-(1-&gt;3)]-beta-D-GlcNAc derivative + GDP + H(+). The catalysed reaction is alpha-Neu5Ac-(2-&gt;3)-beta-D-Gal-(1-&gt;4)-beta-D-GlcNAc-(1-&gt;3)-beta-D-Gal-(1-&gt;4)-D-Glc + GDP-beta-L-fucose = alpha-Neu5Ac-(2-&gt;3)-beta-D-Gal-(1-&gt;4)-[alpha-L-Fuc-(1-&gt;3)]-beta-D-GlcNAc-(1-&gt;3)-beta-D-Gal-(1-&gt;4)-D-Glc + GDP + H(+). It catalyses the reaction alpha-Neu5Ac-(2-&gt;3)-beta-D-Gal-(1-&gt;4)-beta-D-GlcNAc-(1-&gt;3)-beta-D-Gal-(1-&gt;4)-[alpha-L-Fuc-(1-&gt;3)]-beta-D-GlcNAc-(1-&gt;3)-beta-D-Gal-(1-&gt;4)-beta-D-GlcNAc + GDP-beta-L-fucose = alpha-Neu5Ac-(2-&gt;3)-beta-D-Gal-(1-&gt;4)-[alpha-L-Fuc-(1-&gt;3)]-beta-D-GlcNAc-(1-&gt;3)-beta-D-Gal-(1-&gt;4)-[alpha-L-Fuc-(1-&gt;3)]-beta-D-GlcNAc-(1-&gt;3)-beta-D-Gal-(1-&gt;4)-beta-D-GlcNAc + GDP + H(+). It carries out the reaction alpha-Neu5Ac-(2-&gt;3)-beta-D-Gal-(1-&gt;4)-beta-D-GlcNAc-(1-&gt;3)-beta-D-Gal-(1-&gt;4)-beta-D-GlcNAc-(1-&gt;3)-beta-D-Gal-(1-&gt;4)-beta-D-GlcNAc + GDP-beta-L-fucose = alpha-Neu5Ac-(2-&gt;3)-beta-D-Gal-(1-&gt;4)-[alpha-L-Fuc-(1-&gt;3)]-beta-D-GlcNAc-(1-&gt;3)-beta-D-Gal-(1-&gt;4)-beta-D-GlcNAc-(1-&gt;3)-beta-D-Gal-(1-&gt;4)-beta-D-GlcNAc + GDP + H(+). It functions in the pathway protein modification; protein glycosylation. Inhibited by NaCl. Inhibited by GDP in a concentration dependent manner, with an IC(50) value of 93 uM. Also inhibited by GMP and GTP. Inhibited by N-ethylmaleimide. Activated by poly(ethylene glycol) by enhancing the thermal stability of FUT7. Activated by Mn2+, Ca2+, and Mg2+. Both panosialin A and B inhibit activity with IC(50) values of 4.8 and 5.3 ug/ml, respectively. Inhibited by gallic acid (GA) and (-)-epigallocatechin gallate (EGCG) in a time-dependent and irreversible manner with IC(50) values of 60 and 700 nM, respectively. Functionally, catalyzes the transfer of L-fucose, from a guanosine diphosphate-beta-L-fucose, to the N-acetyl glucosamine (GlcNAc) of a distal alpha2,3 sialylated lactosamine unit of a glycoprotein or a glycolipid-linked sialopolylactosamines chain through an alpha-1,3 glycosidic linkage and participates in the final fucosylation step in the biosynthesis of the sialyl Lewis X (sLe(x)), a carbohydrate involved in cell and matrix adhesion during leukocyte trafficking and fertilization. In vitro, also synthesizes sialyl-dimeric-Lex structures, from VIM-2 structures and both di-fucosylated and trifucosylated structures from mono-fucosylated precursors. However does not catalyze alpha 1-3 fucosylation when an internal alpha 1-3 fucosylation is present in polylactosamine chain and the fucosylation rate of the internal GlcNAc residues is reduced once fucose has been added to the distal GlcNAc. Also catalyzes the transfer of a fucose from GDP-beta-fucose to the 6-sulfated a(2,3)sialylated substrate to produce 6-sulfo sLex mediating significant L-selectin-dependent cell adhesion. Through sialyl-Lewis(x) biosynthesis, can control SELE- and SELP-mediated cell adhesion with leukocytes and allows leukocytes tethering and rolling along the endothelial tissue thereby enabling the leukocytes to accumulate at a site of inflammation. May enhance embryo implantation through sialyl Lewis X (sLeX)-mediated adhesion of embryo cells to endometrium. May affect insulin signaling by up-regulating the phosphorylation and expression of some signaling molecules involved in the insulin-signaling pathway through SLe(x) which is present on the glycans of the INSRR alpha subunit. This Mus musculus (Mouse) protein is Alpha-(1,3)-fucosyltransferase 7.